A 340-amino-acid chain; its full sequence is Protein RecA (340 aa).

67-74 (GNESSGKT) contacts ATP.

It belongs to the RecA family.

The protein localises to the cytoplasm. Functionally, can catalyze the hydrolysis of ATP in the presence of single-stranded DNA, the ATP-dependent uptake of single-stranded DNA by duplex DNA, and the ATP-dependent hybridization of homologous single-stranded DNAs. It interacts with LexA causing its activation and leading to its autocatalytic cleavage. The chain is Protein RecA from Mycoplasma genitalium (strain ATCC 33530 / DSM 19775 / NCTC 10195 / G37) (Mycoplasmoides genitalium).